The sequence spans 598 residues: Elongation factor 4 (598 aa).

One can recognise a tr-type G domain in the interval Asn-2–Gln-184. Residues Asp-14–Thr-19 and Asn-131–Asp-134 each bind GTP.

The protein belongs to the TRAFAC class translation factor GTPase superfamily. Classic translation factor GTPase family. LepA subfamily.

It localises to the cell membrane. The enzyme catalyses GTP + H2O = GDP + phosphate + H(+). In terms of biological role, required for accurate and efficient protein synthesis under certain stress conditions. May act as a fidelity factor of the translation reaction, by catalyzing a one-codon backward translocation of tRNAs on improperly translocated ribosomes. Back-translocation proceeds from a post-translocation (POST) complex to a pre-translocation (PRE) complex, thus giving elongation factor G a second chance to translocate the tRNAs correctly. Binds to ribosomes in a GTP-dependent manner. This Wolbachia pipientis subsp. Culex pipiens (strain wPip) protein is Elongation factor 4.